Consider the following 502-residue polypeptide: ATP synthase subunit alpha, chloroplastic (502 aa).

An ATP-binding site is contributed by 170–177; that stretch reads GDRQTGKT.

It belongs to the ATPase alpha/beta chains family. As to quaternary structure, F-type ATPases have 2 components, CF(1) - the catalytic core - and CF(0) - the membrane proton channel. CF(1) has five subunits: alpha(3), beta(3), gamma(1), delta(1), epsilon(1). CF(0) has four main subunits: a, b, b' and c.

It localises to the plastid. The protein resides in the chloroplast thylakoid membrane. It carries out the reaction ATP + H2O + 4 H(+)(in) = ADP + phosphate + 5 H(+)(out). In terms of biological role, produces ATP from ADP in the presence of a proton gradient across the membrane. The alpha chain is a regulatory subunit. The chain is ATP synthase subunit alpha, chloroplastic from Rhodomonas salina (Cryptomonas salina).